Consider the following 391-residue polypeptide: 3-demethoxyubiquinol 3-hydroxylase (391 aa).

This sequence belongs to the UbiH/COQ6 family. Component of the Ubi complex metabolon, which regroups five ubiquinone biosynthesis proteins (UbiE, UbiF, UbiG, UbiH and UbiI) and two accessory factors (UbiK and the lipid-binding protein UbiJ). It depends on FAD as a cofactor.

The protein localises to the cytoplasm. It carries out the reaction a 5-methoxy-2-methyl-3-(all-trans-polyprenyl)benzene-1,4-diol + AH2 + O2 = a 3-demethylubiquinol + A + H2O. The protein operates within cofactor biosynthesis; ubiquinone biosynthesis. Its function is as follows. Catalyzes the hydroxylation of 2-octaprenyl-3-methyl-6-methoxy-1,4-benzoquinol during ubiquinone biosynthesis. In Escherichia coli (strain K12), this protein is 3-demethoxyubiquinol 3-hydroxylase (ubiF).